Reading from the N-terminus, the 450-residue chain is Glucose-6-phosphate isomerase (450 aa).

At T39 the chain carries Phosphothreonine. The active-site Proton donor is the E291. Active-site residues include H312 and K426.

The protein belongs to the GPI family.

The protein localises to the cytoplasm. It catalyses the reaction alpha-D-glucose 6-phosphate = beta-D-fructose 6-phosphate. It functions in the pathway carbohydrate biosynthesis; gluconeogenesis. The protein operates within carbohydrate degradation; glycolysis; D-glyceraldehyde 3-phosphate and glycerone phosphate from D-glucose: step 2/4. In terms of biological role, catalyzes the reversible isomerization of glucose-6-phosphate to fructose-6-phosphate. This chain is Glucose-6-phosphate isomerase, found in Bacillus cereus (strain ATCC 10987 / NRS 248).